Reading from the N-terminus, the 112-residue chain is uncharacterized protein (112 aa).

The signal sequence occupies residues methionine 1–serine 29. Residue asparagine 84 is glycosylated (N-linked (GlcNAc...) asparagine). Positions asparagine 84–histidine 112 are disordered. Residues glutamate 94–histidine 112 show a composition bias toward basic and acidic residues.

The protein localises to the secreted. This is an uncharacterized protein from Homo sapiens (Human).